A 175-amino-acid polypeptide reads, in one-letter code: Coagulogen (175 aa).

Disulfide bonds link Cys-8-Cys-167, Cys-10-Cys-95, Cys-60-Cys-161, Cys-65-Cys-121, Cys-75-Cys-168, Cys-88-Cys-140, Cys-127-Cys-170, and Cys-134-Cys-172.

The protein belongs to the coagulin family. As to quaternary structure, coagulogen is cleaved after Arg-18 and Arg-46 by a clotting enzyme contained in the hemocyte and activated by a bacterial endotoxin (lipopolysaccharide). This cleavage releases the peptide C and leaves 2 chains of coagulin, A and B, linked by two disulfide bonds. Coagulin molecules interlink to form a gel. As to expression, hemolymph.

The protein resides in the secreted. Coagulogen is a gel-forming protein of hemolymph; it hinders the spread of invaders by immobilizing them. The protein is Coagulogen of Carcinoscorpius rotundicauda (Mangrove horseshoe crab).